Here is a 68-residue protein sequence, read N- to C-terminus: Large ribosomal subunit protein bL35 (68 aa).

This sequence belongs to the bacterial ribosomal protein bL35 family.

The sequence is that of Large ribosomal subunit protein bL35 from Fusobacterium nucleatum subsp. nucleatum (strain ATCC 25586 / DSM 15643 / BCRC 10681 / CIP 101130 / JCM 8532 / KCTC 2640 / LMG 13131 / VPI 4355).